Consider the following 258-residue polypeptide: Probable pectin methylesterase CGR3 (258 aa).

Residues 1–29 are Cytoplasmic-facing; the sequence is MSRRQVRRVGDSGSFPFVGALHSKSRSSP. The helical transmembrane segment at 30 to 50 threads the bilayer; it reads LLSVCLVLVGACLLIGYAYSG. The Lumenal portion of the chain corresponds to 51-258; sequence PGMFKSIREV…CQVFHLKPLH (208 aa). N-linked (GlcNAc...) asparagine glycosylation is present at Asn171.

It belongs to the class I-like SAM-binding methyltransferase superfamily.

The protein localises to the golgi apparatus membrane. Together with CGR2, required for homogalacturonan pectins (HG) methylesterification in the Golgi apparatus prior to integration into cell walls, essential for general growth and development. Promotes petiole elongation. Impacts photosynthesis and respiration efficiency by influencing leaf mesophyll morphology and physiology; pectin methylesterification modulates both expansion and positioning of cells in leaves, probably by changing cell walls plasticity. The polypeptide is Probable pectin methylesterase CGR3 (Arabidopsis thaliana (Mouse-ear cress)).